We begin with the raw amino-acid sequence, 59 residues long: Large ribosomal subunit protein eL29 (59 aa).

The segment covering 1–26 (MAKSKNHTAHNQTRKAHRNGIKKPKT) has biased composition (basic residues). The tract at residues 1-37 (MAKSKNHTAHNQTRKAHRNGIKKPKTYKYPSLKGVDP) is disordered. Lys52 participates in a covalent cross-link: Glycyl lysine isopeptide (Lys-Gly) (interchain with G-Cter in ubiquitin).

The protein belongs to the eukaryotic ribosomal protein eL29 family. As to quaternary structure, component of the large ribosomal subunit (LSU). Mature yeast ribosomes consist of a small (40S) and a large (60S) subunit. The 40S small subunit contains 1 molecule of ribosomal RNA (18S rRNA) and 33 different proteins (encoded by 57 genes). The large 60S subunit contains 3 rRNA molecules (25S, 5.8S and 5S rRNA) and 46 different proteins (encoded by 81 genes).

The protein resides in the cytoplasm. Functionally, component of the ribosome, a large ribonucleoprotein complex responsible for the synthesis of proteins in the cell. The small ribosomal subunit (SSU) binds messenger RNAs (mRNAs) and translates the encoded message by selecting cognate aminoacyl-transfer RNA (tRNA) molecules. The large subunit (LSU) contains the ribosomal catalytic site termed the peptidyl transferase center (PTC), which catalyzes the formation of peptide bonds, thereby polymerizing the amino acids delivered by tRNAs into a polypeptide chain. The nascent polypeptides leave the ribosome through a tunnel in the LSU and interact with protein factors that function in enzymatic processing, targeting, and the membrane insertion of nascent chains at the exit of the ribosomal tunnel. The sequence is that of Large ribosomal subunit protein eL29 from Saccharomyces cerevisiae (strain ATCC 204508 / S288c) (Baker's yeast).